We begin with the raw amino-acid sequence, 1441 residues long: MAPLLGRRPFPLVKPLSEAATGEGEEEVYMIEHSKEAFRSREEYESRLERYAERIWTCKSTGSSQLTHKEAWDEEQEVAELLKEEFPVWYEKQVLEMVHHNTISLDKLVDQSWMEIMTKYADGEECDFEVGPEKYLRAKIVKVHPLEKEEQASEKKSEGSCDSPSSDKENSNKVAQDIQLKEESNRLESLSSLRESDRARRSPRKLPTSLKKEEKKWVPPKFLPHKYDVKLLNEDKVISFVPVDSLYRSERPPNKEILRYFIRHNALRIGTGENAPWVVEDELVKKYTLPSKFSDFLLDPHKYMTLNPSSATKRKSLGSPDQKPAKKSKKSPLSPSSWSLANLKKTAVNSSSSEEEMQLMIGANLNKKGSIGKKSDKKKPKNGKSQVLNGQKISAKTRSPKKGLKSPKLKQMTLLDMAKSTPKVSRAQKGGSNTPRSSSKPNKYLPPAALHLISYYRDNKNREDRKSALSALISKVARMLSAEDRKRLPDDLQELVQKRYELLEHRKQWAVMTEEQREEYMRKKREALKARIKEKTRERKQKEREERLEKQKRYEDQDLTGKSLPTFKLVDTPEGLPNALFGDVAMVIEFLSGYSDLLLPDGQYPVTAVSLMEALAAEKGGFMYLNRGLVVLLQTLLQDEIAEDYGELGMKLSEIPLTLHSASELVRLCLRKSDSPAGENESIEKGDEDSEGSAVYQDDEVEDEYLEKLETSEFFELTTEEKLHILAALCHRILMTYSVQDHVDAKQQRSGELWKERLAILKGENDKKRAAKQKRKEQGTVKPKEEVQAAKIVKKQEKINTQQDNDAEDMISAVKSRRLQAMQAKKEKEEHEKLTKERIERETEEERSRKQKASAEKAFHEGIAKAKLVLRRSPLGTDRNHNRYWLFSDEVPGLYIEKGWVHDSINYRFSPESKQDSEQDAEESEDANSSIGCPDDSTQREEKHAETTVPKQGQNLWFLCDTQKELDELLDSLHPQGFRESQLKERLQNRYQDIMHSIHLARKQNLGLKTCDGQQELLNFLRSDIIEVATRLQKGGLGYLDDTTEFEAKVRTFENLKDFGECIVFLQAAVIKKFLQGFMAPKQKKRKHQSEEAAAKAEEQDEEKKMAEEAKVASAVEKWKVAIRDAQTFSRMHVLLGMLDACIKWDMSSENARCKVCRKKGEDDKLILCDECNKAFHLFCLRPVLFNIPDGEWLCPACQPATARRSSRGRNYAEDSTQDEDEEEEEEESEEEEEEESDEEEEEQEMMGQRLRSRKAAKGKPGRPTRRGRPPKNNTHSRVSRQRYVEDTEADVEEMVRQSKPTSRRQNQEFQKCEEILAKLIKYRFSWPFREPFNADEIEDYTKVVTTPMDFQTMQSKCSCGSYQTVQEFLNDLKLVFGNTELYYEAGSSQLSCLEKTEQCARDLLGKHLPAHTYQRRHRKHQSPEPEPETANPGRGRKQKK.

The WAC domain occupies 26–132 (EEVYMIEHSK…GEECDFEVGP (107 aa)). Positions 147-171 (EKEEQASEKKSEGSCDSPSSDKENS) are enriched in basic and acidic residues. Disordered stretches follow at residues 147–212 (EKEE…SLKK), 307–338 (NPSSATKRKSLGSPDQKPAKKSKKSPLSPSSW), 364–445 (NLNK…NKYL), and 531–555 (RIKEKTRERKQKEREERLEKQKRYE). Polar residues predominate over residues 386–397 (QVLNGQKISAKT). A compositionally biased stretch (basic residues) spans 398–408 (RSPKKGLKSPK). Residues 430–441 (GGSNTPRSSSKP) are compositionally biased toward polar residues. A coiled-coil region spans residues 513 to 558 (TEEQREEYMRKKREALKARIKEKTRERKQKEREERLEKQKRYEDQD). A DDT domain is found at 578–642 (NALFGDVAMV…LQTLLQDEIA (65 aa)). Disordered regions lie at residues 675 to 696 (SPAGENESIEKGDEDSEGSAVY), 766 to 785 (DKKRAAKQKRKEQGTVKPKE), 823 to 858 (QAKKEKEEHEKLTKERIERETEEERSRKQKASAEKA), and 911 to 949 (PESKQDSEQDAEESEDANSSIGCPDDSTQREEKHAETTV). Positions 686–696 (GDEDSEGSAVY) are enriched in acidic residues. 3 stretches are compositionally biased toward basic and acidic residues: residues 776 to 785 (KEQGTVKPKE), 824 to 858 (AKKEKEEHEKLTKERIERETEEERSRKQKASAEKA), and 937 to 946 (STQREEKHAE). Positions 813 to 861 (AVKSRRLQAMQAKKEKEEHEKLTKERIERETEEERSRKQKASAEKAFHE) form a coiled coil. Positions 1080 to 1113 (APKQKKRKHQSEEAAAKAEEQDEEKKMAEEAKVA) form a coiled coil. Residues 1151–1201 (NARCKVCRKKGEDDKLILCDECNKAFHLFCLRPVLFNIPDGEWLCPACQPA) form a PHD-type zinc finger. Disordered stretches follow at residues 1204-1308 (RRSS…RQNQ) and 1408-1441 (HLPAHTYQRRHRKHQSPEPEPETANPGRGRKQKK). Positions 1213 to 1253 (AEDSTQDEDEEEEEEESEEEEEEESDEEEEEQEMMGQRLRS) form a coiled coil. Over residues 1216 to 1245 (STQDEDEEEEEEESEEEEEEESDEEEEEQE) the composition is skewed to acidic residues. Basic residues predominate over residues 1251-1270 (LRSRKAAKGKPGRPTRRGRP). The span at 1299-1308 (SKPTSRRQNQ) shows a compositional bias: polar residues. Residues 1304 to 1408 (RRQNQEFQKC…QCARDLLGKH (105 aa)) form the Bromo domain.

The protein belongs to the WAL family. BAZ1B subfamily. Interacts with smarca5/snf2h; the interaction is direct and forms the WICH complex. Component of the B-WICH complex. Mn(2+) serves as cofactor. Highly expressed in the neural tube.

Its subcellular location is the nucleus. The catalysed reaction is L-tyrosyl-[protein] + ATP = O-phospho-L-tyrosyl-[protein] + ADP + H(+). Atypical tyrosine-protein kinase that plays a central role in chromatin remodeling and acts as a transcription regulator. Involved in DNA damage response by phosphorylating 'Tyr-142' of histone H2AX (H2AXY142ph). H2AXY142ph plays a central role in DNA repair and acts as a mark that distinguishes between apoptotic and repair responses to genotoxic stress. Essential component of the WICH complex, a chromatin remodeling complex that mobilizes nucleosomes and reconfigures irregular chromatin to a regular nucleosomal array structure. The WICH complex regulates the transcription of various genes, has a role in RNA polymerase I and RNA polymerase III transcription, mediates the histone H2AX phosphorylation at 'Tyr-142', and is involved in the maintenance of chromatin structures during DNA replication processes. This chain is Tyrosine-protein kinase BAZ1B (baz1b), found in Xenopus laevis (African clawed frog).